The sequence spans 501 residues: Glycerol kinase (501 aa).

An ADP-binding site is contributed by T17. 3 residues coordinate ATP: T17, T18, and S19. T17 is a sn-glycerol 3-phosphate binding site. R21 contacts ADP. R87, E88, Y139, and D243 together coordinate sn-glycerol 3-phosphate. 5 residues coordinate glycerol: R87, E88, Y139, D243, and Q244. The ADP site is built by T265 and G308. Residues T265, G308, Q312, and G409 each coordinate ATP. Positions 409 and 413 each coordinate ADP.

It belongs to the FGGY kinase family.

It carries out the reaction glycerol + ATP = sn-glycerol 3-phosphate + ADP + H(+). The protein operates within polyol metabolism; glycerol degradation via glycerol kinase pathway; sn-glycerol 3-phosphate from glycerol: step 1/1. Its activity is regulated as follows. Inhibited by fructose 1,6-bisphosphate (FBP). In terms of biological role, key enzyme in the regulation of glycerol uptake and metabolism. Catalyzes the phosphorylation of glycerol to yield sn-glycerol 3-phosphate. The sequence is that of Glycerol kinase from Pseudomonas syringae pv. syringae (strain B728a).